Reading from the N-terminus, the 155-residue chain is Small ribosomal subunit protein uS8m (155 aa).

Belongs to the universal ribosomal protein uS8 family. Component of the mitochondrial small ribosomal subunit (mt-SSU). Mature yeast 74S mitochondrial ribosomes consist of a small (37S) and a large (54S) subunit. The 37S small subunit contains a 15S ribosomal RNA (15S mt-rRNA) and 34 different proteins. The 54S large subunit contains a 21S rRNA (21S mt-rRNA) and 46 different proteins.

It is found in the mitochondrion. Component of the mitochondrial ribosome (mitoribosome), a dedicated translation machinery responsible for the synthesis of mitochondrial genome-encoded proteins, including at least some of the essential transmembrane subunits of the mitochondrial respiratory chain. The mitoribosomes are attached to the mitochondrial inner membrane and translation products are cotranslationally integrated into the membrane. The polypeptide is Small ribosomal subunit protein uS8m (MRPS8) (Saccharomyces cerevisiae (strain ATCC 204508 / S288c) (Baker's yeast)).